The primary structure comprises 544 residues: Protein angel homolog 2 (544 aa).

This sequence belongs to the CCR4/nocturin family.

The polypeptide is Protein angel homolog 2 (ANGEL2) (Bos taurus (Bovine)).